The sequence spans 375 residues: Succinyl-diaminopimelate desuccinylase (375 aa).

His66 contacts Zn(2+). Residue Asp68 is part of the active site. Position 99 (Asp99) interacts with Zn(2+). Glu133 (proton acceptor) is an active-site residue. The Zn(2+) site is built by Glu134, Glu162, and His348.

This sequence belongs to the peptidase M20A family. DapE subfamily. Homodimer. Zn(2+) serves as cofactor. It depends on Co(2+) as a cofactor.

The catalysed reaction is N-succinyl-(2S,6S)-2,6-diaminopimelate + H2O = (2S,6S)-2,6-diaminopimelate + succinate. It functions in the pathway amino-acid biosynthesis; L-lysine biosynthesis via DAP pathway; LL-2,6-diaminopimelate from (S)-tetrahydrodipicolinate (succinylase route): step 3/3. In terms of biological role, catalyzes the hydrolysis of N-succinyl-L,L-diaminopimelic acid (SDAP), forming succinate and LL-2,6-diaminopimelate (DAP), an intermediate involved in the bacterial biosynthesis of lysine and meso-diaminopimelic acid, an essential component of bacterial cell walls. This is Succinyl-diaminopimelate desuccinylase from Yersinia pestis bv. Antiqua (strain Antiqua).